The sequence spans 154 residues: Pseudo histidine-containing phosphotransfer protein 6 (154 aa).

Residue Met-1 is modified to N-acetylmethionine. In terms of domain architecture, HPt spans 41-137 (SPNFVYDVIN…HYLKNMMHEL (97 aa)).

In terms of assembly, interacts with AHK5.

The protein localises to the cytoplasm. The protein resides in the cytosol. It localises to the nucleus. Functionally, functions as a two-component phosphorelay mediator between cytokinin sensor histidine kinases and response regulators (B-type ARRs). Plays an important role in propagating cytokinin signal transduction. The sequence is that of Pseudo histidine-containing phosphotransfer protein 6 (AHP6) from Arabidopsis thaliana (Mouse-ear cress).